Consider the following 572-residue polypeptide: Proline--tRNA ligase (572 aa).

Belongs to the class-II aminoacyl-tRNA synthetase family. ProS type 1 subfamily. In terms of assembly, homodimer.

Its subcellular location is the cytoplasm. The enzyme catalyses tRNA(Pro) + L-proline + ATP = L-prolyl-tRNA(Pro) + AMP + diphosphate. Functionally, catalyzes the attachment of proline to tRNA(Pro) in a two-step reaction: proline is first activated by ATP to form Pro-AMP and then transferred to the acceptor end of tRNA(Pro). As ProRS can inadvertently accommodate and process non-cognate amino acids such as alanine and cysteine, to avoid such errors it has two additional distinct editing activities against alanine. One activity is designated as 'pretransfer' editing and involves the tRNA(Pro)-independent hydrolysis of activated Ala-AMP. The other activity is designated 'posttransfer' editing and involves deacylation of mischarged Ala-tRNA(Pro). The misacylated Cys-tRNA(Pro) is not edited by ProRS. In Escherichia coli O17:K52:H18 (strain UMN026 / ExPEC), this protein is Proline--tRNA ligase.